The primary structure comprises 315 residues: MIVVVIADKEFYGWAESVPYARYDESISTSTKQIKALFCDRSFTRKMELSELINTLPAGAARNALDCAMWDLQAKQSTRPVAEILSKTSITSICAHTLSIDTPKAMQEAVLAMNSPPLVKVKLDKQDIIARMTAIANAAPHSQFIVDANEDWCFRDLEENVEALKALNVVLIEQPLPAGEDEQLINFTSPIPLCADESCHTENDLPYLQGRYQVVNIKLDKTGGLTQACSLASKAQKMGFDIMLGCMVGSSLAMAPASLLASQARYVDLDGPLLVLKDRKHHFTYADGQMSPLQSCLWGGAHNSERFFVDRLQLQ.

Mg(2+) contacts are provided by D147, E173, and D196.

This sequence belongs to the mandelate racemase/muconate lactonizing enzyme family. Mg(2+) is required as a cofactor.

The catalysed reaction is N-acetyl-D-glutamate = N-acetyl-L-glutamate. The protein operates within amino-acid degradation. Functionally, racemase involved in a deamination-independent D-glutamate degradation pathway, named the DgcN-DgcA pathway. Catalyzes the conversion of N-acetyl-D-glutamate to N-acetyl-L-glutamate. Also shows racemase activity towards the dipeptide L-Ala-D-Glu, a key constituent of peptidoglycan muropeptides, suggesting that it may also contribute to the degradation of peptidoglycans. This is N-acetyl-D-glutamate racemase from Pseudoalteromonas sp.